A 128-amino-acid chain; its full sequence is Small ribosomal subunit protein uS11 (128 aa).

It belongs to the universal ribosomal protein uS11 family. In terms of assembly, part of the 30S ribosomal subunit. Interacts with proteins S7 and S18. Binds to IF-3.

Functionally, located on the platform of the 30S subunit, it bridges several disparate RNA helices of the 16S rRNA. Forms part of the Shine-Dalgarno cleft in the 70S ribosome. The protein is Small ribosomal subunit protein uS11 of Synechococcus sp. (strain JA-2-3B'a(2-13)) (Cyanobacteria bacterium Yellowstone B-Prime).